The sequence spans 327 residues: 4-hydroxyproline 2-epimerase (327 aa).

The active-site Proton acceptor is the cysteine 85. Substrate is bound by residues 86 to 87 (GH), histidine 205, and aspartate 231. Cysteine 235 serves as the catalytic Proton donor. Substrate is bound at residue 236 to 237 (GT).

Belongs to the proline racemase family.

The catalysed reaction is trans-4-hydroxy-L-proline = cis-4-hydroxy-D-proline. Its function is as follows. Catalyzes the epimerization of trans-4-hydroxy-L-proline (t4LHyp) to cis-4-hydroxy-D-proline (c4DHyp). Displays no proline racemase activity. The polypeptide is 4-hydroxyproline 2-epimerase (Roseibium alexandrii (strain DSM 17067 / NCIMB 14079 / DFL-11) (Labrenzia alexandrii)).